Here is a 290-residue protein sequence, read N- to C-terminus: 33 kDa chaperonin (290 aa).

2 disulfides stabilise this stretch: Cys235–Cys237 and Cys268–Cys271.

This sequence belongs to the HSP33 family. Under oxidizing conditions two disulfide bonds are formed involving the reactive cysteines. Under reducing conditions zinc is bound to the reactive cysteines and the protein is inactive.

It is found in the cytoplasm. Redox regulated molecular chaperone. Protects both thermally unfolding and oxidatively damaged proteins from irreversible aggregation. Plays an important role in the bacterial defense system toward oxidative stress. In Streptococcus pneumoniae (strain JJA), this protein is 33 kDa chaperonin.